The sequence spans 630 residues: 1-deoxy-D-xylulose-5-phosphate synthase (630 aa).

Residues His-72 and 113–115 (GHS) contribute to the thiamine diphosphate site. A Mg(2+)-binding site is contributed by Asp-144. Residues 145–146 (GA), Asn-173, Tyr-284, and Glu-367 contribute to the thiamine diphosphate site. Asn-173 is a binding site for Mg(2+).

This sequence belongs to the transketolase family. DXPS subfamily. Homodimer. The cofactor is Mg(2+). It depends on thiamine diphosphate as a cofactor.

The catalysed reaction is D-glyceraldehyde 3-phosphate + pyruvate + H(+) = 1-deoxy-D-xylulose 5-phosphate + CO2. It functions in the pathway metabolic intermediate biosynthesis; 1-deoxy-D-xylulose 5-phosphate biosynthesis; 1-deoxy-D-xylulose 5-phosphate from D-glyceraldehyde 3-phosphate and pyruvate: step 1/1. Catalyzes the acyloin condensation reaction between C atoms 2 and 3 of pyruvate and glyceraldehyde 3-phosphate to yield 1-deoxy-D-xylulose-5-phosphate (DXP). This Bacillus cereus (strain ATCC 10987 / NRS 248) protein is 1-deoxy-D-xylulose-5-phosphate synthase.